A 285-amino-acid polypeptide reads, in one-letter code: Para-Rep C6 (285 aa).

Residues 3-99 form the CRESS-DNA virus Rep endonuclease domain; sequence TRQSTSWVFT…VAGPWEYGLF (97 aa). The short motif at 10–13 is the RCR-1 element; the sequence is VFTL. Residues glutamate 36 and histidine 42 each contribute to the a divalent metal cation site. The RCR-2 motif lies at 42–44; that stretch reads HLQ. The short motif at 52–74 is the Nuclear localization signal element; it reads RNTTLRQAKYIFNGLNPHLEIAR. Tyrosine 82 serves as the catalytic For DNA cleavage activity. The short motif at 82 to 85 is the RCR-3 element; that stretch reads YAMK. Residue aspartate 87 participates in a divalent metal cation binding. A Nuclear localization signal motif is present at residues 99–105; it reads FIKRGSH. Residue 175–183 coordinates ATP; it reads GPAGNEGKS.

It belongs to the nanoviridea/circoviridae replication-associated protein family. Homooligomer (Potential). Rep binds to repeated DNA motifs (iterons). It depends on Mg(2+) as a cofactor. The cofactor is Mn(2+).

It is found in the host nucleus. It catalyses the reaction ATP + H2O = ADP + phosphate + H(+). Its function is as follows. Initiates and terminates the replication only of its own subviral DNA molecule. The closed circular ssDNA genome is first converted to a superhelical dsDNA. Rep binds a specific hairpin at the genome origin of replication. Introduces an endonucleolytic nick within the intergenic region of the genome, thereby initiating the rolling circle replication (RCR). Following cleavage, binds covalently to the 5'-phosphate of DNA as a tyrosyl ester. The cleavage gives rise to a free 3'-OH that serves as a primer for the cellular DNA polymerase. The polymerase synthesizes the (+) strand DNA by rolling circle mechanism. After one round of replication, a Rep-catalyzed nucleotidyl transfer reaction releases a circular single-stranded virus genome, thereby terminating the replication. Displays origin-specific DNA cleavage, nucleotidyl transferase, ATPase and helicase activities. The protein is Para-Rep C6 (C6) of Subterranean clover stunt C6 alphasatellite (SCSC6A).